Consider the following 394-residue polypeptide: MNLGTPLKPGATRVLLLGSGELGKEVAIEAQRLGVEVIAVDRYADAPAMQVAHRSHVISMQDREELKRVIGLERPDLIVPEIEAIDTEFLLELEQGGQRVIPTARATNLTMNREGIRRLAAEELGLPTARYAFAASLEEMRGHVAQIGCPCVIKPIMSSSGKGQSVLRDPSQVDEAWRYAMEGARGASDTVIIEEFIQFDYEITLLTVRHCNGTSFCPPIGHVQIKGDYHESWQPMAMSPAALAEARRQAEAVTTALGGYGLFGVELFISNDRVLFSEVSPRPHDTGMVTMISQNLSQFELHVRAILGLPVGEIVNLAPSASHVILADASFDAVRFEGLEQALEVATSKLRLFGKPDTRPGRRMGVALVQGKDTDEARGRAEACAHAVRMVPLS.

Residues 21 to 22 (EL) and Glu-81 contribute to the N(1)-(5-phospho-beta-D-ribosyl)glycinamide site. Residues Arg-113, Lys-154, 159 to 164 (SSGKGQ), 194 to 197 (EEFI), and Glu-202 each bind ATP. The 190-residue stretch at 118–307 (RLAAEELGLP…QFELHVRAIL (190 aa)) folds into the ATP-grasp domain. Mg(2+)-binding residues include Glu-266 and Glu-278. Residues Asp-285, Lys-355, and 362–363 (RR) contribute to the N(1)-(5-phospho-beta-D-ribosyl)glycinamide site.

This sequence belongs to the PurK/PurT family. Homodimer.

The enzyme catalyses N(1)-(5-phospho-beta-D-ribosyl)glycinamide + formate + ATP = N(2)-formyl-N(1)-(5-phospho-beta-D-ribosyl)glycinamide + ADP + phosphate + H(+). It functions in the pathway purine metabolism; IMP biosynthesis via de novo pathway; N(2)-formyl-N(1)-(5-phospho-D-ribosyl)glycinamide from N(1)-(5-phospho-D-ribosyl)glycinamide (formate route): step 1/1. In terms of biological role, involved in the de novo purine biosynthesis. Catalyzes the transfer of formate to 5-phospho-ribosyl-glycinamide (GAR), producing 5-phospho-ribosyl-N-formylglycinamide (FGAR). Formate is provided by PurU via hydrolysis of 10-formyl-tetrahydrofolate. This chain is Formate-dependent phosphoribosylglycinamide formyltransferase, found in Pelobacter propionicus (strain DSM 2379 / NBRC 103807 / OttBd1).